Consider the following 238-residue polypeptide: Ribonuclease PH (238 aa).

Phosphate contacts are provided by residues arginine 86 and 124–126 (GTR).

This sequence belongs to the RNase PH family. As to quaternary structure, homohexameric ring arranged as a trimer of dimers.

The catalysed reaction is tRNA(n+1) + phosphate = tRNA(n) + a ribonucleoside 5'-diphosphate. In terms of biological role, phosphorolytic 3'-5' exoribonuclease that plays an important role in tRNA 3'-end maturation. Removes nucleotide residues following the 3'-CCA terminus of tRNAs; can also add nucleotides to the ends of RNA molecules by using nucleoside diphosphates as substrates, but this may not be physiologically important. Probably plays a role in initiation of 16S rRNA degradation (leading to ribosome degradation) during starvation. The chain is Ribonuclease PH from Maricaulis maris (strain MCS10) (Caulobacter maris).